A 192-amino-acid chain; its full sequence is Leucine-rich repeat-containing protein 51 (192 aa).

LRR repeat units lie at residues 49–71 (SLTQ…NQVA), 80–101 (NLAW…LTTF), and 103–124 (NLSV…NKLA). An LRRCT domain is found at 137-175 (NPMEEEKGYRQYVLCTLSRITTFDFAGVTKADRTTAEVW).

The protein localises to the cytoplasm. The protein is Leucine-rich repeat-containing protein 51 of Pan troglodytes (Chimpanzee).